A 104-amino-acid chain; its full sequence is SOSS complex subunit C (104 aa).

Alanine 2 carries the post-translational modification N-acetylalanine. Serine 50 carries the phosphoserine modification.

Belongs to the SOSS-C family. Component of the SOSS complex, composed of SOSS-B (SOSS-B1/NABP2 or SOSS-B2/NABP1), SOSS-A/INTS3 and SOSS-C/INIP. SOSS complexes containing SOSS-B1/NABP2 are more abundant than complexes containing SOSS-B2/NABP1. Interacts with INTS3; the interaction is direct.

The protein resides in the nucleus. In terms of biological role, component of the SOSS complex, a multiprotein complex that functions downstream of the MRN complex to promote DNA repair and G2/M checkpoint. The SOSS complex associates with single-stranded DNA at DNA lesions and influences diverse endpoints in the cellular DNA damage response including cell-cycle checkpoint activation, recombinational repair and maintenance of genomic stability. Required for efficient homologous recombination-dependent repair of double-strand breaks (DSBs) and ATM-dependent signaling pathways. The protein is SOSS complex subunit C (Inip) of Mus musculus (Mouse).